We begin with the raw amino-acid sequence, 192 residues long: Flavin prenyltransferase UbiX (192 aa).

FMN is bound by residues 10–12 (GAS), Ser36, 92–95 (SMTT), and Arg127. Positions 157 and 173 each coordinate dimethylallyl phosphate.

Belongs to the UbiX/PAD1 family.

It catalyses the reaction dimethylallyl phosphate + FMNH2 = prenylated FMNH2 + phosphate. Its function is as follows. Flavin prenyltransferase that catalyzes the synthesis of the prenylated FMN cofactor (prenyl-FMN) for 4-hydroxy-3-polyprenylbenzoic acid decarboxylase UbiD. The prenyltransferase is metal-independent and links a dimethylallyl moiety from dimethylallyl monophosphate (DMAP) to the flavin N5 and C6 atoms of FMN. The polypeptide is Flavin prenyltransferase UbiX (Chlamydia pneumoniae (Chlamydophila pneumoniae)).